The following is a 63-amino-acid chain: Large ribosomal subunit protein uL29 (63 aa).

The protein belongs to the universal ribosomal protein uL29 family.

This Photobacterium profundum (strain SS9) protein is Large ribosomal subunit protein uL29.